Here is a 327-residue protein sequence, read N- to C-terminus: Glycolipid sulfotransferase BCG_1434 (327 aa).

40–45 (KSGLTW) is a 3'-phosphoadenylyl sulfate binding site. His-97 serves as the catalytic Proton acceptor. 3'-phosphoadenylyl sulfate is bound at residue 116-124 (RDPRDAAVS).

It belongs to the sulfotransferase 1 family.

In terms of biological role, involved in the synthesis of cell wall sulfolipids. This Mycobacterium bovis (strain BCG / Pasteur 1173P2) protein is Glycolipid sulfotransferase BCG_1434.